A 63-amino-acid polypeptide reads, in one-letter code: MKAQELREKSVEELNTELLNLLREQFNLRMQAASGQLQQTHLLKQVRRNVARVKTLLTEKAGA.

It belongs to the universal ribosomal protein uL29 family.

This chain is Large ribosomal subunit protein uL29, found in Yersinia pseudotuberculosis serotype O:1b (strain IP 31758).